The sequence spans 1501 residues: Neither inactivation nor afterpotential protein C (1501 aa).

A Protein kinase domain is found at 16–282; the sequence is FEIYEEIAQG…MVEMVEHPFL (267 aa). ATP contacts are provided by residues 22–30 and K45; that span reads IAQGVNAKV. D145 serves as the catalytic Proton acceptor. Position 183 is a phosphoserine (S183). The region spanning 332 to 1037 is the Myosin motor domain; the sequence is MYPEDLAALE…FLARLYELQV (706 aa). The interval 913 to 934 is actin-binding; that stretch reads LTLLKMLSQNANLGVHFVRCIR. IQ domains lie at 1036–1065 and 1072–1101; these read QVKK…FKLG and HDVA…EKSG. Residues 1043–1271 are interaction with rtp; it reads VQSMMRALLA…RMGESDNIYN (229 aa). The non alpha-helical, C-terminal domain stretch occupies residues 1066–1501; sequence KKGPEHHDVA…ITLSGYAVDI (436 aa). Disordered stretches follow at residues 1308–1364 and 1390–1473; these read NWGV…DPVR and KTNY…EDSN. Positions 1326-1335 are enriched in pro residues; the sequence is APPPPPPPMP. A compositionally biased stretch (low complexity) spans 1336-1358; that stretch reads SSNYYRNNPNQQQRNYQQRSSYP. Basic and acidic residues predominate over residues 1405–1414; that stretch reads NNRRGSDSGD. Residues 1449-1463 show a composition bias toward polar residues; the sequence is FGQQQRAPTLRQSPA.

The protein in the C-terminal section; belongs to the TRAFAC class myosin-kinesin ATPase superfamily. Myosin family. In the N-terminal section; belongs to the protein kinase superfamily. Ser/Thr protein kinase family. Interacts with rtp. In terms of tissue distribution, expressed in the phototransducing compartment of photoreceptor cells, the rhabdomeres (at protein level).

It is found in the cytoplasm. Its subcellular location is the cytoskeleton. The protein localises to the nucleus. It localises to the membrane. The protein resides in the cell projection. It is found in the rhabdomere membrane. The catalysed reaction is L-seryl-[protein] + ATP = O-phospho-L-seryl-[protein] + ADP + H(+). It carries out the reaction L-threonyl-[protein] + ATP = O-phospho-L-threonyl-[protein] + ADP + H(+). Functionally, required for photoreceptor cell function. The ninaC proteins combines putative serine/threonine-protein kinase and myosin activities. Essential for the expression and stability of the rtp protein in the photoreceptors. The rtp/ninaC complex is required for stability of inad and inac and the normal termination of phototransduction in the retina. This chain is Neither inactivation nor afterpotential protein C (ninaC), found in Drosophila melanogaster (Fruit fly).